The following is a 196-amino-acid chain: RNA polymerase II subunit B1 CTD phosphatase RTR2 (196 aa).

Residues 52 to 123 form an RTR1-type zinc finger; the sequence is YLARLLSPMS…LSQTPLHERR (72 aa). Zn(2+) contacts are provided by Cys-75, Cys-80, Cys-99, and His-103.

Belongs to the RPAP2 family.

Its subcellular location is the cytoplasm. It localises to the nucleus. It carries out the reaction O-phospho-L-seryl-[protein] + H2O = L-seryl-[protein] + phosphate. The enzyme catalyses O-phospho-L-threonyl-[protein] + H2O = L-threonyl-[protein] + phosphate. In terms of biological role, probable RNA polymerase II subunit B1 C-terminal domain (CTD) phosphatase that regulates RNA polymerase II transcription. May have functional redundancy with RTR1. This chain is RNA polymerase II subunit B1 CTD phosphatase RTR2 (RTR2), found in Saccharomyces cerevisiae (strain ATCC 204508 / S288c) (Baker's yeast).